A 558-amino-acid polypeptide reads, in one-letter code: Ankyrin repeat protein OPG189 (558 aa).

ANK repeat units lie at residues 65–95, 169–205, 209–239, 243–272, 276–304, 339–368, and 372–401; these read YGEN…NINK, YGCT…DVDK, HGNT…NIDS, NGYT…NVNT, FGTT…ELEI, YNET…DFET, and SGCT…SLKI.

The protein belongs to the orthopoxvirus OPG189 protein family.

In terms of biological role, contributes to viral release without involving rearrangement of host actin. This Homo sapiens (Human) protein is Ankyrin repeat protein OPG189 (OPG189).